A 535-amino-acid polypeptide reads, in one-letter code: Cytochrome P450 71C3 (535 aa).

Residues 23 to 43 (QTLTLLLIAVPTVLLLLASLA) form a helical membrane-spanning segment. Cysteine 475 is a heme binding site.

It belongs to the cytochrome P450 family. The cofactor is heme.

It is found in the membrane. It functions in the pathway secondary metabolite biosynthesis; 2,4-dihydroxy-1,4-benzoxazin-3-one biosynthesis; 2,4-dihydroxy-1,4-benzoxazin-3-one from indoleglycerol phosphate: step 5/5. Its function is as follows. Catalyzes the conversion of 2-hydroxy-1,4-benzoxazin-3-one (HBOA) to 2,4-dihydroxy-1,4-benzoxazin-3-one (DIBOA). In Zea mays (Maize), this protein is Cytochrome P450 71C3 (CYP71C3).